The chain runs to 369 residues: DNA polymerase IV 2 (369 aa).

The UmuC domain maps to valine 17 to glycine 201. Residues aspartate 21 and aspartate 119 each contribute to the Mg(2+) site. Glutamate 120 is an active-site residue.

This sequence belongs to the DNA polymerase type-Y family. As to quaternary structure, monomer. Requires Mg(2+) as cofactor.

It is found in the cytoplasm. It catalyses the reaction DNA(n) + a 2'-deoxyribonucleoside 5'-triphosphate = DNA(n+1) + diphosphate. Functionally, poorly processive, error-prone DNA polymerase involved in untargeted mutagenesis. Copies undamaged DNA at stalled replication forks, which arise in vivo from mismatched or misaligned primer ends. These misaligned primers can be extended by PolIV. Exhibits no 3'-5' exonuclease (proofreading) activity. May be involved in translesional synthesis. The polypeptide is DNA polymerase IV 2 (dbh2) (Methanosarcina mazei (strain ATCC BAA-159 / DSM 3647 / Goe1 / Go1 / JCM 11833 / OCM 88) (Methanosarcina frisia)).